The following is a 217-amino-acid chain: N-(5'-phosphoribosyl)anthranilate isomerase (217 aa).

It belongs to the TrpF family.

It catalyses the reaction N-(5-phospho-beta-D-ribosyl)anthranilate = 1-(2-carboxyphenylamino)-1-deoxy-D-ribulose 5-phosphate. The protein operates within amino-acid biosynthesis; L-tryptophan biosynthesis; L-tryptophan from chorismate: step 3/5. The protein is N-(5'-phosphoribosyl)anthranilate isomerase of Chlorobium chlorochromatii (strain CaD3).